Reading from the N-terminus, the 117-residue chain is Immunoglobulin lambda variable 7-43 (117 aa).

An N-terminal signal peptide occupies residues 1–19 (MAWTPLFLFLLTCCPGSNS). The segment at 20–44 (QTVVTQEPSLTVSPGGTVTLTCASS) is framework-1. Positions 20–117 (QTVVTQEPSL…YCLLYYGGAQ (98 aa)) constitute an Ig-like domain. C41 and C109 are oxidised to a cystine. Residues 45–53 (TGAVTSGYY) are complementarity-determining-1. Residues 54–70 (PNWFQQKPGQAPRALIY) form a framework-2 region. The tract at residues 71–73 (STS) is complementarity-determining-2. The tract at residues 74-109 (NKHSWTPARFSGSLLGGKAALTLSGVQPEDEAEYYC) is framework-3. Positions 110–117 (LLYYGGAQ) are complementarity-determining-3.

Immunoglobulins are composed of two identical heavy chains and two identical light chains; disulfide-linked.

The protein resides in the secreted. It localises to the cell membrane. Its function is as follows. V region of the variable domain of immunoglobulin light chains that participates in the antigen recognition. Immunoglobulins, also known as antibodies, are membrane-bound or secreted glycoproteins produced by B lymphocytes. In the recognition phase of humoral immunity, the membrane-bound immunoglobulins serve as receptors which, upon binding of a specific antigen, trigger the clonal expansion and differentiation of B lymphocytes into immunoglobulins-secreting plasma cells. Secreted immunoglobulins mediate the effector phase of humoral immunity, which results in the elimination of bound antigens. The antigen binding site is formed by the variable domain of one heavy chain, together with that of its associated light chain. Thus, each immunoglobulin has two antigen binding sites with remarkable affinity for a particular antigen. The variable domains are assembled by a process called V-(D)-J rearrangement and can then be subjected to somatic hypermutations which, after exposure to antigen and selection, allow affinity maturation for a particular antigen. This Homo sapiens (Human) protein is Immunoglobulin lambda variable 7-43.